Reading from the N-terminus, the 315-residue chain is Acetyl-coenzyme A carboxylase carboxyl transferase subunit alpha (315 aa).

One can recognise a CoA carboxyltransferase C-terminal domain in the interval 32–293 (NISDEIARLQ…RADLVQQLDM (262 aa)).

This sequence belongs to the AccA family. As to quaternary structure, acetyl-CoA carboxylase is a heterohexamer composed of biotin carboxyl carrier protein (AccB), biotin carboxylase (AccC) and two subunits each of ACCase subunit alpha (AccA) and ACCase subunit beta (AccD).

The protein localises to the cytoplasm. It catalyses the reaction N(6)-carboxybiotinyl-L-lysyl-[protein] + acetyl-CoA = N(6)-biotinyl-L-lysyl-[protein] + malonyl-CoA. It participates in lipid metabolism; malonyl-CoA biosynthesis; malonyl-CoA from acetyl-CoA: step 1/1. Component of the acetyl coenzyme A carboxylase (ACC) complex. First, biotin carboxylase catalyzes the carboxylation of biotin on its carrier protein (BCCP) and then the CO(2) group is transferred by the carboxyltransferase to acetyl-CoA to form malonyl-CoA. The chain is Acetyl-coenzyme A carboxylase carboxyl transferase subunit alpha from Pseudomonas putida (strain ATCC 47054 / DSM 6125 / CFBP 8728 / NCIMB 11950 / KT2440).